A 253-amino-acid polypeptide reads, in one-letter code: Glucosamine-6-phosphate deaminase (253 aa).

D65 serves as the catalytic Proton acceptor; for enolization step. The For ring-opening step role is filled by N133. H135 serves as the catalytic Proton acceptor; for ring-opening step. The active-site For ring-opening step is E140.

Belongs to the glucosamine/galactosamine-6-phosphate isomerase family. NagB subfamily.

It catalyses the reaction alpha-D-glucosamine 6-phosphate + H2O = beta-D-fructose 6-phosphate + NH4(+). The protein operates within amino-sugar metabolism; N-acetylneuraminate degradation; D-fructose 6-phosphate from N-acetylneuraminate: step 5/5. Functionally, catalyzes the reversible isomerization-deamination of glucosamine 6-phosphate (GlcN6P) to form fructose 6-phosphate (Fru6P) and ammonium ion. This chain is Glucosamine-6-phosphate deaminase, found in Corynebacterium glutamicum (strain R).